The chain runs to 1220 residues: MKLKEVDRTAMQAWSPAQNHPIYLATGTSAQQLDATFSTNASLEIFELDLSDPSLDMKSCATFSSSHRYHKLIWGPYKMDSKGDVSGVLIAGGENGNIILYDPSKIIAGDKEVVIAQNDKHTGPVRALDVNIFQTNLVASGANESEIYIWDLNNFATPMTPGAKTQPPEDISCIAWNRQVQHILASASPSGRATVWDLRKNEPIIKVSDHSNRMHCSGLAWHPDVATQMVLASEDDRLPVIQMWDLRFASSPLRVLENHARGILAIAWSMADPELLLSCGKDAKILCSNPNTGEVLYELPTNTQWCFDIQWCPRNPAVLSAASFDGRISVYSIMGGSTDGLRQKQVDKLSSSFGNLDPFGTGQPLPPLQIPQQTAQHSIVLPLKKPPKWIRRPVGASFSFGGKLVTFENVRMPSHQGAEQQQQQHHVFISQVVTEKEFLSRSDQLQQAVQSQGFINYCQKKIDASQTEFEKNVWSFLKVNFEDDSRGKYLELLGYRKEDLGKKIALALNKVDGANVALKDSDQVAQSDGEESPAAEEQLLGEHIKEEKEESEFLPSSGGTFNISVSGDIDGLITQALLTGNFESAVDLCLHDNRMADAIILAIAGGQELLARTQKKYFAKSQSKITRLITAVVMKNWKEIVESCDLKNWREALAAVLTYAKPDEFSALCDLLGTRLENEGDSLLQTQACLCYICAGNVEKLVACWTKAQDGSHPLSLQDLIEKVVILRKAVQLTQAMDTSTVGVLLAAKMSQYANLLAAQGSIAAALAFLPDNTNQPNIMQLRDRLCRAQGEPVAGHESPKIPYEKQQLPKGRPGPVAGHHQMPRVQTQQYYPHGENPPPPGFIMHGNVNPNAAGQLPTSPGHMHTQVPPYPQPQPYQPAQPYPFGTGGSAMYRPQQPVAPPTSNAYPNTPYISSASSYTGQSQLYAAQHQASSPTSSPATSFPPPPSSGASFQHGGPGAPPSSSAYALPPGTTGTLPAASELPASQRTGPQNGWNDPPALNRVPKKKKMPENFMPPVPITSPIMNPLGDPQSQMLQQQPSAPVPLSSQSSFPQPHLPGGQPFHGVQQPLGQTGMPPSFSKPNIEGAPGAPIGNTFQHVQSLPTKKITKKPIPDEHLILKTTFEDLIQRCLSSATDPQTKRKLDDASKRLEFLYDKLREQTLSPTITSGLHNIARSIETRNYSEGLTMHTHIVSTSNFSETSAFMPVLKVVLTQANKLGV.

WD repeat units lie at residues 4–47 (KEVD…EIFE), 68–111 (RYHK…AGDK), 120–160 (KHTG…TPMT), 166–206 (QPPE…PIIK), 209–254 (DHSN…SPLR), 258–298 (NHAR…VLYE), and 301–342 (TNTQ…DGLR). The interaction with SEC13 stretch occupies residues 161–471 (PGAKTQPPED…IDASQTEFEK (311 aa)). Residues 397-430 (SFSFGGKLVTFENVRMPSHQGAEQQQQQHHVFIS) form a WD 8; interaction with SEC13 repeat. Ser-527 and Ser-532 each carry phosphoserine. Residue Lys-647 forms a Glycyl lysine isopeptide (Lys-Gly) (interchain with G-Cter in ubiquitin) linkage. Disordered stretches follow at residues 791-908 (GEPV…NAYP) and 924-1096 (QLYA…GNTF). Position 799 is a phosphoserine (Ser-799). The tract at residues 800 to 1113 (PKIPYEKQQL…TKKITKKPIP (314 aa)) is interaction with PDCD6. Positions 842–848 (GFIMHGN) match the ALG-2-binding site motif-2 (ABS-2) motif. The segment covering 849-859 (VNPNAAGQLPT) has biased composition (polar residues). Positions 869–882 (PPYPQPQPYQPAQP) are enriched in pro residues. A compositionally biased stretch (low complexity) spans 962–972 (PSSSAYALPPG). Composition is skewed to polar residues over residues 984 to 995 (PASQRTGPQNGW) and 1031 to 1053 (PQSQMLQQQPSAPVPLSSQSSFP). Position 1161 is a phosphothreonine (Thr-1161). Ser-1163 is subject to Phosphoserine. Lys-1217 is covalently cross-linked (Glycyl lysine isopeptide (Lys-Gly) (interchain with G-Cter in ubiquitin)).

It belongs to the WD repeat SEC31 family. In terms of assembly, COPII is composed of at least 5 proteins: the SEC23/24 complex, the SEC13/31 complex and SAR1. SEC13 and SEC31 make a 2:2 tetramer that forms the edge element of the COPII outer coat. The tetramer self-assembles in multiple copies to form the complete polyhedral cage. Interacts (via WD 8) with SEC13. Interacts with PDCD6; interaction takes place in response to cytosolic calcium increase and leads to bridge together the BCR(KLHL12) complex and SEC31A, leading to monoubiquitination. Interacts with KLHL12. Post-translationally, monoubiquitinated by the BCR(KLHL12) E3 ubiquitin ligase complex, leading to regulate the size of COPII coats. In terms of tissue distribution, abundantly and ubiquitously expressed.

It is found in the cytoplasm. The protein resides in the cytoplasmic vesicle. Its subcellular location is the COPII-coated vesicle membrane. The protein localises to the endoplasmic reticulum membrane. It localises to the cytosol. Its function is as follows. Component of the coat protein complex II (COPII) which promotes the formation of transport vesicles from the endoplasmic reticulum (ER). The coat has two main functions, the physical deformation of the endoplasmic reticulum membrane into vesicles and the selection of cargo molecules. This chain is Protein transport protein Sec31A (SEC31A), found in Homo sapiens (Human).